Reading from the N-terminus, the 475-residue chain is Putative response regulator NtrX-like (475 aa).

The 117-residue stretch at 5 to 121 (DVLIVDDEES…KLVILLKRAC (117 aa)) folds into the Response regulatory domain. D54 bears the 4-aspartylphosphate mark. Positions 143–369 (LVGGCSVTLK…LRNVVEWTLI (227 aa)) constitute a Sigma-54 factor interaction domain. ATP contacts are provided by residues 171-178 (GKVGSGKE) and 232-241 (ANNGTLYIDE).

Functionally, member of the two-component regulatory system RF_0895/RF_0427. The chain is Putative response regulator NtrX-like from Rickettsia felis (strain ATCC VR-1525 / URRWXCal2) (Rickettsia azadi).